Here is a 110-residue protein sequence, read N- to C-terminus: Translation initiation factor 1A 3 (110 aa).

The disordered stretch occupies residues 1-29 (MIRKRQSGSNKSVSSGNNQEVTRVRTPRK). Over residues 7–18 (SGSNKSVSSGNN) the composition is skewed to low complexity. Residues 22–96 (TRVRTPRKDR…SKADVIWKYT (75 aa)) enclose the S1-like domain.

This sequence belongs to the eIF-1A family.

Functionally, seems to be required for maximal rate of protein biosynthesis. Enhances ribosome dissociation into subunits and stabilizes the binding of the initiator Met-tRNA(I) to 40 S ribosomal subunits. The chain is Translation initiation factor 1A 3 (eIF1A3) from Methanosarcina acetivorans (strain ATCC 35395 / DSM 2834 / JCM 12185 / C2A).